Reading from the N-terminus, the 326-residue chain is UDP-N-acetylglucosamine transporter (326 aa).

A run of 8 helical transmembrane segments spans residues 4 to 24, 38 to 58, 136 to 156, 174 to 194, 212 to 232, 243 to 263, 269 to 289, and 293 to 313; these read NLKYLSLGILVFQTTSLVLTM, LSSTAVVVAEFLKIMACIFLV, LGMYQWLSLVILMAGVAFVQW, FVGLMAVLIACFSSGFAGVYF, LGFFGSIFGLMGVYVYDGELV, QLTWIVVVLQALGGLVIAAVI, ILKGFATSLSIILSTIISYFW, and FVPTSVFFLGAILVIAATFLY.

This sequence belongs to the nucleotide-sugar transporter family. SLC35A subfamily. Interacts with SLC35A2; the interaction is reduced in the presence of SLC35A4. Found in a complex with SLC35A2 and SLC35A4. Interacts with MGAT4B. In terms of processing, O-Glcnacylation regulates the stability of SLC35A3 and the specific complex formation with MGAT4B.

It localises to the golgi apparatus membrane. The enzyme catalyses UMP(out) + UDP-N-acetyl-alpha-D-glucosamine(in) = UMP(in) + UDP-N-acetyl-alpha-D-glucosamine(out). Transports diphosphate-N-acetylglucosamine (UDP-GlcNAc) from the cytosol into the lumen of the Golgi apparatus, functioning as an antiporter that exchanges UDP-N-acetyl-alpha-D-glucosamine for UMP. May supply UDP-GlcNAc as substrate for Golgi-resident glycosyltransferases that generate highly branched, multiantennary complex N-glycans and keratan sulfate. However, the exact role of SLC35A3 still needs to be elucidated, it could be a member of a catalytically more efficient multiprotein complex rather than function independently as a single transporter. The chain is UDP-N-acetylglucosamine transporter (Slc35a3) from Rattus norvegicus (Rat).